The sequence spans 280 residues: Energy-coupling factor transporter ATP-binding protein EcfA1 (280 aa).

The ABC transporter domain maps to 6–241 (IELKNVTFRY…GDELLDLGLD (236 aa)). 41 to 48 (GHNGSGKS) lines the ATP pocket.

The protein belongs to the ABC transporter superfamily. Energy-coupling factor EcfA family. Forms a stable energy-coupling factor (ECF) transporter complex composed of 2 membrane-embedded substrate-binding proteins (S component), 2 ATP-binding proteins (A component) and 2 transmembrane proteins (T component).

Its subcellular location is the cell membrane. In terms of biological role, ATP-binding (A) component of a common energy-coupling factor (ECF) ABC-transporter complex. Unlike classic ABC transporters this ECF transporter provides the energy necessary to transport a number of different substrates. In Streptococcus mutans serotype c (strain ATCC 700610 / UA159), this protein is Energy-coupling factor transporter ATP-binding protein EcfA1.